Consider the following 998-residue polypeptide: RNA-directed RNA polymerase (998 aa).

Interaction with host mitochondria outer membrane stretches follow at residues 1–67 (MTLK…DKTK) and 233–250 (VRTS…RMIG). The homomultimerization stretch occupies residues 1-400 (MTLKVILGEH…KPTMPRVHWP (400 aa)). Residues 17 to 34 (LLVGIATVSGCGAVVYCI) form a helical membrane-spanning segment. The interval 35 to 998 (SKFWGYGAIA…AQPQPSNNRK (964 aa)) is cytoplasmic. A capping region spans residues 91 to 282 (NGHAVSGAVR…LVYTIPQYVI (192 aa)). Residue Asp692 is the For RdRp/TNTase activity of the active site. The homomultimerization stretch occupies residues 700–800 (IQKSINRAAK…MVLRLYGPTA (101 aa)). Residues 901–998 (AKQTRANPGT…AQPQPSNNRK (98 aa)) are disordered. Composition is skewed to polar residues over residues 904-913 (TRANPGTSRP) and 947-961 (GKTN…TAGE). The span at 971 to 984 (KGPRGGKTNTRRTP) shows a compositional bias: basic residues.

The protein belongs to the nodaviridae RNA polymerase family. As to quaternary structure, homododecamer. Forms 2 stacked rings of 35-nm in diameter, arranged in a crown-like structure at the opening of virus-induced replication vesicles. Interacts with protein B2. Requires Mn(2+) as cofactor.

It localises to the host mitochondrion outer membrane. It carries out the reaction RNA(n) + a ribonucleoside 5'-triphosphate = RNA(n+1) + diphosphate. With respect to regulation, drastically inhibited by phosphonoacetic acid. Only slightly inhibited by gliotoxin. Functionally, RNA-dependent RNA polymerase, which replicates the viral genome composed of 2 RNA segments, RNA1 and RNA2. Does not need an exogenous primer. Also possesses a terminal nucleotidyl transferase (TNTase) activity. The TNTase catalyzes the addition of nucleotide to the 3'-end of plus- and minus-stranded RNAs, probably to repair the 3'-end nucleotide loss. Forms the open necked connection to the cytosol of the virus-induced replication vesicles. Mediates viral RNA1 recruitment. The sequence is that of RNA-directed RNA polymerase from Costelytra zealandica (Greater wax moth).